Reading from the N-terminus, the 160-residue chain is uncharacterized protein (160 aa).

A Cupin type-2 domain is found at 37 to 110; the sequence is LMSLKPKEDI…TDYLKLYTIY (74 aa).

It localises to the virion. This is an uncharacterized protein from Acanthamoeba polyphaga mimivirus (APMV).